The sequence spans 150 residues: Small ribosomal subunit protein bS6 (150 aa).

The segment at 92-150 is disordered; sequence KGINKPAKPKKTFKKTFVARKFSRDDESKTHSTEEPRRANTKSTYKKSTSFSQDNKNKK. The span at 98 to 109 shows a compositional bias: basic residues; that stretch reads AKPKKTFKKTFV. The segment covering 113-129 has biased composition (basic and acidic residues); it reads FSRDDESKTHSTEEPRR. The segment covering 132 to 141 has biased composition (low complexity); it reads TKSTYKKSTS.

The protein belongs to the bacterial ribosomal protein bS6 family.

Binds together with bS18 to 16S ribosomal RNA. This is Small ribosomal subunit protein bS6 from Mycoplasmopsis pulmonis (strain UAB CTIP) (Mycoplasma pulmonis).